Here is a 719-residue protein sequence, read N- to C-terminus: Polyribonucleotide nucleotidyltransferase (719 aa).

Aspartate 507 and aspartate 513 together coordinate Mg(2+). A KH domain is found at 573–633; the sequence is PKLELFSVDP…EQIKAAKDYI (61 aa). An S1 motif domain is found at 658-719; the sequence is GQEFQGIVKK…NGKISVDLCE (62 aa).

It belongs to the polyribonucleotide nucleotidyltransferase family. It depends on Mg(2+) as a cofactor.

It is found in the cytoplasm. The enzyme catalyses RNA(n+1) + phosphate = RNA(n) + a ribonucleoside 5'-diphosphate. In terms of biological role, involved in mRNA degradation. Catalyzes the phosphorolysis of single-stranded polyribonucleotides processively in the 3'- to 5'-direction. The sequence is that of Polyribonucleotide nucleotidyltransferase from Campylobacter jejuni subsp. jejuni serotype O:23/36 (strain 81-176).